Consider the following 247-residue polypeptide: Synaptogyrin homolog 1 (247 aa).

Residues 21-175 (FFKKPTVLFR…AAFFAWRRYE (155 aa)) form the MARVEL domain. 4 helical membrane passes run 25 to 45 (PTVLFRCAALLFGLILWYSVS), 69 to 89 (CSFATAVGFFAVCGAIVLIVL), 105 to 125 (AVLADLVVSAIFTAIFLIGFF), and 151 to 171 (FGILSALLSFLAWGGAAFFAW). The segment at 206–247 (DSTGIGHVGAPPPQSSYQSGAAPQTMQQPPSNPYTQSEGYGY) is disordered. Over residues 220–247 (SSYQSGAAPQTMQQPPSNPYTQSEGYGY) the composition is skewed to polar residues.

It belongs to the synaptogyrin family. Expressed in a wide variety of neurons and is expressed weakly in the non-neuronal distal tip cells. A punctate pattern was observed in the ventral and dorsal nerve cords and the nerve ring. Weak expression is seen in neuronal cell bodies and commissures.

It localises to the membrane. The chain is Synaptogyrin homolog 1 (sng-1) from Caenorhabditis elegans.